A 336-amino-acid chain; its full sequence is Putative ataxin-3 homolog (336 aa).

One can recognise a Josephin domain in the interval 10-193 (GGLLYHEVQE…KECPMATEGS (184 aa)). C23 (nucleophile) is an active-site residue. The active-site Proton acceptor is H132. The active site involves N147. Positions 244–263 (QEEADLNAAIAASLMDTGGP) constitute a UIM domain. The disordered stretch occupies residues 281–336 (IESTSGEMSKDGNLEEQGANKSETSEPNSDNIESASGSNPKQNTTSLEGKESIKED). The span at 299-327 (ANKSETSEPNSDNIESASGSNPKQNTTSL) shows a compositional bias: polar residues.

It localises to the nucleus. It carries out the reaction Thiol-dependent hydrolysis of ester, thioester, amide, peptide and isopeptide bonds formed by the C-terminal Gly of ubiquitin (a 76-residue protein attached to proteins as an intracellular targeting signal).. Its function is as follows. Interacts with key regulators of transcription and represses transcription. Acts as a histone-binding protein that regulates transcription. Acts as a deubiquitinating enzyme. This is Putative ataxin-3 homolog from Oryza sativa subsp. japonica (Rice).